The primary structure comprises 69 residues: DNA gyrase inhibitor YacG (69 aa).

Positions 1–15 (MSDEPEHTAKVEPLR) are enriched in basic and acidic residues. The disordered stretch occupies residues 1 to 22 (MSDEPEHTAKVEPLRKPLPCPE). 4 residues coordinate Zn(2+): C20, C23, C35, and C39.

The protein belongs to the DNA gyrase inhibitor YacG family. Interacts with GyrB. Zn(2+) is required as a cofactor.

Inhibits all the catalytic activities of DNA gyrase by preventing its interaction with DNA. Acts by binding directly to the C-terminal domain of GyrB, which probably disrupts DNA binding by the gyrase. The sequence is that of DNA gyrase inhibitor YacG from Allorhizobium ampelinum (strain ATCC BAA-846 / DSM 112012 / S4) (Agrobacterium vitis (strain S4)).